A 62-amino-acid chain; its full sequence is Photosystem II reaction center protein Z (62 aa).

The next 2 helical transmembrane spans lie at 8 to 28 and 41 to 61; these read ALVALVLVSFVLVVGVPVAYA and WLGSGVWIALVLLVGLLNFFV.

This sequence belongs to the PsbZ family. As to quaternary structure, PSII is composed of 1 copy each of membrane proteins PsbA, PsbB, PsbC, PsbD, PsbE, PsbF, PsbH, PsbI, PsbJ, PsbK, PsbL, PsbM, PsbT, PsbX, PsbY, PsbZ, Psb30/Ycf12, peripheral proteins PsbO, CyanoQ (PsbQ), PsbU, PsbV and a large number of cofactors. It forms dimeric complexes.

It localises to the cellular thylakoid membrane. In terms of biological role, may control the interaction of photosystem II (PSII) cores with the light-harvesting antenna, regulates electron flow through the 2 photosystem reaction centers. PSII is a light-driven water plastoquinone oxidoreductase, using light energy to abstract electrons from H(2)O, generating a proton gradient subsequently used for ATP formation. This chain is Photosystem II reaction center protein Z, found in Nostoc sp. (strain PCC 7120 / SAG 25.82 / UTEX 2576).